The chain runs to 171 residues: Neudesin (171 aa).

A signal peptide spans 1-30; it reads MARPAPWWRLRLLAALVLALALVPVPSAWA. The 86-residue stretch at 43–128 folds into the Cytochrome b5 heme-binding domain; the sequence is VRLFTEEELA…KELEALDDVF (86 aa). Lys-135 carries the post-translational modification N6-acetyllysine.

This sequence belongs to the cytochrome b5 family. MAPR subfamily. In terms of assembly, interacts with PINK1 and PARK7. In the embryo, expressed most abundantly in brain and spinal cord. Widely expressed in adult tissues including brain, heart, lung and kidney. In brain, expressed in neurons but not in glial cells. In the hypothalamus is expressed primarily in the paraventricular nucleus (PVN), with lower levels of expression in the arcuate nucleus (ARC).

It is found in the secreted. The protein localises to the extracellular space. The protein resides in the mitochondrion. Its subcellular location is the endoplasmic reticulum. In terms of biological role, acts as a neurotrophic factor in postnatal mature neurons, enhancing neuronal survival. Promotes cell proliferation and neurogenesis in undifferentiated neural pro-genitor cells at the embryonic stage and inhibits differentiation of astrocytes. Its neurotrophic activity is exerted via MAPK1/ERK2, MAPK3/ERK1 and AKT1/AKT pathways. Neurotrophic activity is enhanced by binding to heme. Also acts as an anorexigenic neurotrophic factor that contributes to energy balance. The chain is Neudesin from Mus musculus (Mouse).